Here is a 691-residue protein sequence, read N- to C-terminus: Elongation factor G 2 (691 aa).

Residues 8–287 (DRYRNIGIMA…AVVDYLPSPL (280 aa)) form the tr-type G domain. GTP-binding positions include 17 to 24 (AHIDAGKT), 85 to 89 (DTPGH), and 139 to 142 (NKMD).

The protein belongs to the TRAFAC class translation factor GTPase superfamily. Classic translation factor GTPase family. EF-G/EF-2 subfamily.

Its subcellular location is the cytoplasm. In terms of biological role, catalyzes the GTP-dependent ribosomal translocation step during translation elongation. During this step, the ribosome changes from the pre-translocational (PRE) to the post-translocational (POST) state as the newly formed A-site-bound peptidyl-tRNA and P-site-bound deacylated tRNA move to the P and E sites, respectively. Catalyzes the coordinated movement of the two tRNA molecules, the mRNA and conformational changes in the ribosome. The sequence is that of Elongation factor G 2 from Myxococcus xanthus (strain DK1622).